The chain runs to 134 residues: uncharacterized protein (134 aa).

Residues 1–16 (MAKAVALLLAAIAASA) form the signal peptide.

This is an uncharacterized protein from Oryza sativa subsp. indica (Rice).